A 916-amino-acid polypeptide reads, in one-letter code: Phosphoenolpyruvate carboxylase (916 aa).

Catalysis depends on residues H144 and K578.

It belongs to the PEPCase type 1 family. Mg(2+) is required as a cofactor.

It carries out the reaction oxaloacetate + phosphate = phosphoenolpyruvate + hydrogencarbonate. Its function is as follows. Forms oxaloacetate, a four-carbon dicarboxylic acid source for the tricarboxylic acid cycle. The sequence is that of Phosphoenolpyruvate carboxylase from Aromatoleum aromaticum (strain DSM 19018 / LMG 30748 / EbN1) (Azoarcus sp. (strain EbN1)).